Reading from the N-terminus, the 390-residue chain is GTPase Obg (390 aa).

Residues 1-159 enclose the Obg domain; it reads MKFVDEAVVK…REIRLELLLL (159 aa). In terms of domain architecture, OBG-type G spans 160-333; the sequence is ADVGMLGLPN…LCYKLADFME (174 aa). GTP contacts are provided by residues 166 to 173, 191 to 195, 213 to 216, 283 to 286, and 314 to 316; these read GLPNAGKS, FTTLI, DIPG, NKVD, and SAI. Ser173 and Thr193 together coordinate Mg(2+). A compositionally biased stretch (acidic residues) spans 367 to 382; sequence TEDDDDWDDWDDEEDD. The tract at residues 367 to 390 is disordered; sequence TEDDDDWDDWDDEEDDGHVVYVRD.

This sequence belongs to the TRAFAC class OBG-HflX-like GTPase superfamily. OBG GTPase family. Monomer. The cofactor is Mg(2+).

The protein resides in the cytoplasm. Functionally, an essential GTPase which binds GTP, GDP and possibly (p)ppGpp with moderate affinity, with high nucleotide exchange rates and a fairly low GTP hydrolysis rate. Plays a role in control of the cell cycle, stress response, ribosome biogenesis and in those bacteria that undergo differentiation, in morphogenesis control. This is GTPase Obg from Vibrio parahaemolyticus serotype O3:K6 (strain RIMD 2210633).